The primary structure comprises 312 residues: MNNIHTPVLATEMLSYLAPVDNETYLDCTFGAGGYSKLILSNCNCKVIAFDRDPAVISIASQFYQQYPNRFTFFNENFVEANKYLSKLDKLNGIVMDLGVSSMQLDEANRGFSFRYDAELDMRMSQKGYKASEFVNEASEHQLADIIYKFGEENKANKIAKHIVLARKKKPITTTLQLANIIREAVGYNNYYKKNKIDSATKTFQAIRIFINDELSAIQNFLNQSLELLAVNGRLIVVSFHALEDAIIKKFMHQNAVKKVAQSKYSTNRQSPLQNGVLYLLTKKIAVPTRTEIINNPRSRSARLRAALKINE.

Residues 33–35 (GGY), aspartate 51, phenylalanine 78, aspartate 97, and glutamine 104 each bind S-adenosyl-L-methionine.

This sequence belongs to the methyltransferase superfamily. RsmH family.

The protein resides in the cytoplasm. The enzyme catalyses cytidine(1402) in 16S rRNA + S-adenosyl-L-methionine = N(4)-methylcytidine(1402) in 16S rRNA + S-adenosyl-L-homocysteine + H(+). In terms of biological role, specifically methylates the N4 position of cytidine in position 1402 (C1402) of 16S rRNA. The polypeptide is Ribosomal RNA small subunit methyltransferase H (Orientia tsutsugamushi (strain Ikeda) (Rickettsia tsutsugamushi)).